We begin with the raw amino-acid sequence, 142 residues long: Large ribosomal subunit protein uL13 (142 aa).

It belongs to the universal ribosomal protein uL13 family. Part of the 50S ribosomal subunit.

In terms of biological role, this protein is one of the early assembly proteins of the 50S ribosomal subunit, although it is not seen to bind rRNA by itself. It is important during the early stages of 50S assembly. The protein is Large ribosomal subunit protein uL13 of Teredinibacter turnerae (strain ATCC 39867 / T7901).